A 727-amino-acid polypeptide reads, in one-letter code: Epithelial splicing regulatory protein 2 (727 aa).

The disordered stretch occupies residues 1–22; that stretch reads MTPPPPPPPPPGPDPAADPAAD. The residue at position 83 (Ser-83) is a Phosphoserine. RRM domains are found at residues 257–353, 358–438, and 475–555; these read TVVR…RFLS, VILR…RSTA, and DCVR…PCST. The residue at position 573 (Ser-573) is a Phosphoserine.

The protein belongs to the ESRP family. As to quaternary structure, interacts with RBPMS. Epithelial cell-specific.

Its subcellular location is the nucleus. Functionally, mRNA splicing factor that regulates the formation of epithelial cell-specific isoforms. Specifically regulates the expression of FGFR2-IIIb, an epithelial cell-specific isoform of FGFR2. Also regulates the splicing of CD44, CTNND1, ENAH, 3 transcripts that undergo changes in splicing during the epithelial-to-mesenchymal transition (EMT). Acts by directly binding specific sequences in mRNAs. Binds the GU-rich sequence motifs in the ISE/ISS-3, a cis-element regulatory region present in the mRNA of FGFR2. This chain is Epithelial splicing regulatory protein 2 (ESRP2), found in Homo sapiens (Human).